The primary structure comprises 185 residues: NEDD8-conjugating enzyme UBE2F (185 aa).

The interval 1–29 (MLTLASKLKRDDGVKGSRTSSTTSDSTRR) is disordered. Positions 1–29 (MLTLASKLKRDDGVKGSRTSSTTSDSTRR) are interaction with uba3. Residues 32–185 (VRDRLLVKEV…VEDYIKRYAR (154 aa)) form the UBC core domain. Cys116 functions as the Glycyl thioester intermediate in the catalytic mechanism.

This sequence belongs to the ubiquitin-conjugating enzyme family. UBE2F subfamily.

It carries out the reaction [E1 NEDD8-activating enzyme]-S-[NEDD8 protein]-yl-L-cysteine + [E2 NEDD8-conjugating enzyme]-L-cysteine = [E1 NEDD8-activating enzyme]-L-cysteine + [E2 NEDD8-conjugating enzyme]-S-[NEDD8-protein]-yl-L-cysteine.. The protein operates within protein modification; protein neddylation. In terms of biological role, accepts the ubiquitin-like protein NEDD8 from the UBA3-NAE1 E1 complex and catalyzes its covalent attachment to other proteins. Together with the E3 ubiquitin ligase rnf7/rbx2, specifically neddylates cullin-5 (cul5). Does not neddylate cul1, cul2, cul3, cul4a or cul4b. The protein is NEDD8-conjugating enzyme UBE2F (ube2f) of Xenopus tropicalis (Western clawed frog).